Consider the following 166-residue polypeptide: Large ribosomal subunit protein uL10 (166 aa).

This sequence belongs to the universal ribosomal protein uL10 family. Part of the ribosomal stalk of the 50S ribosomal subunit. The N-terminus interacts with L11 and the large rRNA to form the base of the stalk. The C-terminus forms an elongated spine to which L12 dimers bind in a sequential fashion forming a multimeric L10(L12)X complex.

Its function is as follows. Forms part of the ribosomal stalk, playing a central role in the interaction of the ribosome with GTP-bound translation factors. This chain is Large ribosomal subunit protein uL10, found in Shewanella denitrificans (strain OS217 / ATCC BAA-1090 / DSM 15013).